A 220-amino-acid polypeptide reads, in one-letter code: Sericin-2 (220 aa).

Low complexity-rich tracts occupy residues 1-131 (SSST…ASSS) and 141-155 (NESS…QNSA). The tract at residues 1 to 220 (SSSTNNSSGS…SSSSSSWSSA (220 aa)) is disordered. The segment covering 156–165 (TRSQVINADG) has biased composition (polar residues). The segment covering 166–220 (SQSSSSSSSSASNQASATSSSSVSADGSESESSSSSSSSSSSSSESSSSSSWSSA) has biased composition (low complexity).

As to expression, produced exclusively in the middle (MSG) section of silk glands.

Its subcellular location is the secreted. Provides the silk fibroin thread with a sticky coating. Acts as a cement by sticking silk threads together. In Galleria mellonella (Greater wax moth), this protein is Sericin-2 (SER2).